The following is a 742-amino-acid chain: Photosystem I P700 chlorophyll a apoprotein A2 (742 aa).

The next 8 membrane-spanning stretches (helical) occupy residues 46–69, 135–158, 175–199, 273–291, 336–359, 375–401, 423–445, and 525–543; these read LFSTHFGHLAIIGLWVAGNLFHIA, LFQGAIFINILVCWLLFAGWLHLQ, LNHHLAVLFGFSSIAWTGHLIHVAI, IAHHHLAIGVVFIIAGHMY, LHFQLGLALASLGVACSLVAQHMG, SALYTHHQYIAMFLMVGAFSHGAIFFV, ALISHLSWVTMLLGFHTLGIYVH, and FLVHHAIALGLHTTALILI. Positions 567 and 576 each coordinate [4Fe-4S] cluster. 2 helical membrane-spanning segments follow: residues 583–604 and 651–673; these read ATYLAMFWALNTIAWITFYWHW and LSPWAWMFLFGHLIWATGFMFLI. Divinyl chlorophyll a is bound by residues histidine 662, methionine 670, and tyrosine 678. Tryptophan 679 contacts phylloquinone. The helical transmembrane segment at 715 to 735 threads the bilayer; that stretch reads LVGLTHFTVGNFVTFGAFVIA.

The protein belongs to the PsaA/PsaB family. In terms of assembly, the PsaA/B heterodimer binds the P700 divinyl chlorophyll special pair and subsequent electron acceptors. PSI consists of a core antenna complex that captures photons, and an electron transfer chain that converts photonic excitation into a charge separation. The cyanobacterial PSI reaction center is composed of one copy each of PsaA,B,C,D,E,F,I,J,K,L,M and X, and forms trimeric complexes. The cofactor is PSI electron transfer chain: 5 divinyl chlorophyll a, 1 divinyl chlorophyll a', 2 phylloquinones and 3 4Fe-4S clusters. PSI core antenna: 90 divinyl chlorophyll a, 22 carotenoids, 3 phospholipids and 1 galactolipid. P700 is a divinyl chlorophyll a/divinyl chlorophyll a' dimer, A0 is one or more divinyl chlorophyll a, A1 is one or both phylloquinones and FX is a shared 4Fe-4S iron-sulfur center..

It localises to the cellular thylakoid membrane. It catalyses the reaction reduced [plastocyanin] + hnu + oxidized [2Fe-2S]-[ferredoxin] = oxidized [plastocyanin] + reduced [2Fe-2S]-[ferredoxin]. In terms of biological role, psaA and PsaB bind P700, the primary electron donor of photosystem I (PSI), as well as the electron acceptors A0, A1 and FX. PSI is a plastocyanin/cytochrome c6-ferredoxin oxidoreductase, converting photonic excitation into a charge separation, which transfers an electron from the donor P700 chlorophyll pair to the spectroscopically characterized acceptors A0, A1, FX, FA and FB in turn. Oxidized P700 is reduced on the lumenal side of the thylakoid membrane by plastocyanin or cytochrome c6. This chain is Photosystem I P700 chlorophyll a apoprotein A2, found in Prochlorococcus marinus (strain NATL2A).